The chain runs to 248 residues: Aquaporin Z (248 aa).

2 helical membrane-spanning segments follow: residues 11–31 (FIGT…AAAF) and 36–56 (IGFA…AFAI). Residues 65–67 (NPA) carry the NPA 1 motif. Transmembrane regions (helical) follow at residues 87 to 107 (IAAQ…IAGG), 132 to 152 (LLAC…IILG), and 161 to 181 (GFAP…SIPV). An NPA 2 motif is present at residues 187–189 (NPA). A helical membrane pass occupies residues 203–223 (IAELWLFWLAPIVGAALAGLF).

Belongs to the MIP/aquaporin (TC 1.A.8) family. As to quaternary structure, homotetramer.

The protein localises to the cell inner membrane. The enzyme catalyses H2O(in) = H2O(out). Its function is as follows. Channel that permits osmotically driven movement of water in both directions. It is involved in the osmoregulation and in the maintenance of cell turgor during volume expansion in rapidly growing cells. It mediates rapid entry or exit of water in response to abrupt changes in osmolarity. The sequence is that of Aquaporin Z from Gloeobacter violaceus (strain ATCC 29082 / PCC 7421).